We begin with the raw amino-acid sequence, 369 residues long: S-(hydroxymethyl)glutathione dehydrogenase (369 aa).

The Zn(2+) site is built by Cys-40, His-62, Cys-92, Cys-95, Cys-98, Cys-106, and Cys-169.

The protein belongs to the zinc-containing alcohol dehydrogenase family. Class-III subfamily. As to quaternary structure, homodimer. The cofactor is Zn(2+).

The protein localises to the cytoplasm. It catalyses the reaction S-(hydroxymethyl)glutathione + NADP(+) = S-formylglutathione + NADPH + H(+). The catalysed reaction is S-(hydroxymethyl)glutathione + NAD(+) = S-formylglutathione + NADH + H(+). It carries out the reaction a primary alcohol + NAD(+) = an aldehyde + NADH + H(+). The enzyme catalyses a secondary alcohol + NAD(+) = a ketone + NADH + H(+). It catalyses the reaction S-nitrosoglutathione + NADH + H(+) = S-(hydroxysulfenamide)glutathione + NAD(+). Functionally, has high formaldehyde dehydrogenase activity in the presence of glutathione and catalyzes the oxidation of normal alcohols in a reaction that is not GSH-dependent. In addition, hemithiolacetals other than those formed from GSH, including omega-thiol fatty acids, also are substrates. Also acts as a S-nitroso-glutathione reductase by catalyzing the NADH-dependent reduction of S-nitrosoglutathione. This Photobacterium damsela subsp. piscicida (Pasteurella piscicida) protein is S-(hydroxymethyl)glutathione dehydrogenase (frmA).